The chain runs to 691 residues: Gex-3-interacting protein 13 (691 aa).

Disordered stretches follow at residues 18–97 (TASL…SAHL) and 171–195 (PASP…KRQR). Residues 31-46 (SSFTTTSESTSPPYSS) are compositionally biased toward low complexity. The segment covering 47 to 57 (SEHHSPTDQRT) has biased composition (basic and acidic residues). Positions 58-79 (ETPTSDSGNASFSPENVATSFE) are enriched in polar residues. Low complexity predominate over residues 171–183 (PASPCTTAASAPS). BED-type zinc fingers lie at residues 194–242 (QRRN…YEKV) and 424–473 (LRRH…YEKV). Zn(2+) is bound by residues cysteine 212, cysteine 215, histidine 230, histidine 235, cysteine 443, cysteine 446, histidine 461, and histidine 466.

Interacts with gex-3.

The chain is Gex-3-interacting protein 13 (gei-13) from Caenorhabditis elegans.